A 265-amino-acid chain; its full sequence is Uridylate kinase (265 aa).

The interval 1–29 (MTESREPHVAGSAAPRPEPANGLASGQPS) is disordered. 40–43 (KLGG) contributes to the ATP binding site. Gly81 lines the UMP pocket. Gly82 and Arg86 together coordinate ATP. Residues Asp101 and 162-169 (MGLPYFST) each bind UMP. The ATP site is built by Phe195 and Asp198.

It belongs to the UMP kinase family. In terms of assembly, homohexamer.

Its subcellular location is the cytoplasm. The enzyme catalyses UMP + ATP = UDP + ADP. It functions in the pathway pyrimidine metabolism; CTP biosynthesis via de novo pathway; UDP from UMP (UMPK route): step 1/1. With respect to regulation, inhibited by UTP. Its function is as follows. Catalyzes the reversible phosphorylation of UMP to UDP. The sequence is that of Uridylate kinase from Mycobacterium avium (strain 104).